The primary structure comprises 657 residues: Zinc finger CCCH domain-containing protein 50 (657 aa).

ANK repeat units lie at residues 68–97 (EART…CVDV) and 104–136 (DGAT…DPAT). A compositionally biased stretch (low complexity) spans 176-206 (SVASGSSSPPLSSSPDEGNRSPSSRSSSLSP). Positions 176 to 222 (SVASGSSSPPLSSSPDEGNRSPSSRSSSLSPITVDRGKKEYPVDPTL) are disordered. 2 C3H1-type zinc fingers span residues 274–302 (PYTA…HGVF) and 311–333 (YRTR…AHDE). The interval 507 to 566 (YSPRALDPSSLAHSPFGGMSPRSPRTMEPTSPLSARVGAPATQRPSVGSPRNSSAWGTVG) is disordered. Residues 549–562 (QRPSVGSPRNSSAW) show a composition bias toward polar residues.

The sequence is that of Zinc finger CCCH domain-containing protein 50 from Oryza sativa subsp. japonica (Rice).